Here is an 89-residue protein sequence, read N- to C-terminus: FMRFamide-like neuropeptides 19 (89 aa).

An N-terminal signal peptide occupies residues 1–20 (MSFQLTLFSMLFLLIAVVVG). Residues 21–67 (QPIQSQNGDLKMQAVQDNSPLNMEAFNDDSALYDYLEQSDPSLKSME) constitute a propeptide that is removed on maturation. Phe-76 is modified (phenylalanine amide). Positions 80-89 (ASWASSVRFG) are excised as a propeptide.

This sequence belongs to the FARP (FMRFamide related peptide) family. As to expression, each flp gene is expressed in a distinct set of neurons. Flp-19 is expressed in the URX interneurons, the serotonin and acetylcholine-expressing HSN neurons, and the AIN, AWA and BAG neurons.

It localises to the secreted. In terms of biological role, FMRFamides and FMRFamide-like peptides are neuropeptides. WANQVRF-amide inhibits the activity of dissected pharyngeal myogenic muscle system. This chain is FMRFamide-like neuropeptides 19, found in Caenorhabditis elegans.